A 154-amino-acid polypeptide reads, in one-letter code: Periplasmic nitrate reductase, electron transfer subunit (154 aa).

The signal sequence occupies residues 1–24; the sequence is MSMHPALRLLATVLVALGAGPAFT. Residues 27 to 47 form a disordered region; that stretch reads APRLTGADRPMSEVAAPPLPE. The heme c site is built by His-68, Cys-82, Cys-85, His-86, His-103, Cys-122, Cys-125, and His-126.

The protein belongs to the NapB family. Component of the periplasmic nitrate reductase NapAB complex composed of NapA and NapB. Binds 2 heme C groups per subunit.

It localises to the periplasm. In terms of biological role, electron transfer subunit of the periplasmic nitrate reductase complex NapAB. Receives electrons from the membrane-anchored tetraheme c-type NapC protein and transfers these to NapA subunit, thus allowing electron flow between membrane and periplasm. Essential for periplasmic nitrate reduction with nitrate as the terminal electron acceptor. The polypeptide is Periplasmic nitrate reductase, electron transfer subunit (Cereibacter sphaeroides (Rhodobacter sphaeroides)).